Reading from the N-terminus, the 600-residue chain is Elongation factor 4 (600 aa).

The tr-type G domain occupies 13–194 (DRIRNFCIIA…AIVERIPPPR (182 aa)). Residues 25-30 (DHGKST) and 141-144 (NKID) contribute to the GTP site.

It belongs to the TRAFAC class translation factor GTPase superfamily. Classic translation factor GTPase family. LepA subfamily.

Its subcellular location is the cell membrane. The catalysed reaction is GTP + H2O = GDP + phosphate + H(+). Required for accurate and efficient protein synthesis under certain stress conditions. May act as a fidelity factor of the translation reaction, by catalyzing a one-codon backward translocation of tRNAs on improperly translocated ribosomes. Back-translocation proceeds from a post-translocation (POST) complex to a pre-translocation (PRE) complex, thus giving elongation factor G a second chance to translocate the tRNAs correctly. Binds to ribosomes in a GTP-dependent manner. This Rubrobacter xylanophilus (strain DSM 9941 / JCM 11954 / NBRC 16129 / PRD-1) protein is Elongation factor 4.